The sequence spans 428 residues: Probable 4-methylmuconolactone transporter (428 aa).

At 1 to 26 the chain is on the cytoplasmic side; sequence MFAWYKAGSPQQKKTFWACYSGWALD. The helical transmembrane segment at 27–47 threads the bilayer; that stretch reads SFDMQMFSFLLPALTLTWGLT. The Periplasmic segment spans residues 48-50; sequence KAE. A helical transmembrane segment spans residues 51 to 71; sequence VGVLGTVALVVTAIGGWGAGI. Topologically, residues 72–80 are cytoplasmic; it reads LSDRYGRAR. A helical membrane pass occupies residues 81–101; the sequence is ILVLAIIWFTLFGVLAGFAQS. The Periplasmic segment spans residues 102 to 110; that stretch reads YQQLLIART. The chain crosses the membrane as a helical span at residues 111–131; sequence LQGLGFGGEWAVGAALMAEVI. At 132 to 145 the chain is on the cytoplasmic side; sequence DSRHRGKAIGFVQS. The chain crosses the membrane as a helical span at residues 146–166; it reads GFALGWALAVVVATLLLAWLP. Residue K167 is a topological domain, periplasmic. Residues 168 to 188 traverse the membrane as a helical segment; the sequence is EMAWRVAFWSGIIPALIVLFI. Topologically, residues 189-227 are cytoplasmic; sequence RRHVKDSSMFERARQSRAPRASLSSVFNRKYARTLALSS. A helical membrane pass occupies residues 228–248; sequence VLVIGLQAGCYAILVWLPSLL. Topologically, residues 249 to 252 are periplasmic; it reads NQRQ. Residues 253-273 traverse the membrane as a helical segment; sequence VAAGSMIVTVFIMAFGSFCGF. Residues 274–287 lie on the Cytoplasmic side of the membrane; the sequence is AVTADLSDRIGRRP. Residues 288-308 form a helical membrane-spanning segment; that stretch reads TLILLSVCAWIVTVSYMLLPL. Over 309–314 the chain is Periplasmic; it reads NTTLTA. A helical transmembrane segment spans residues 315–335; it reads ILGFLVGFSAIGMFAALGPFL. The Cytoplasmic portion of the chain corresponds to 336-356; that stretch reads SELFPTNVRTTCMGFAYNVGK. A helical transmembrane segment spans residues 357–371; that stretch reads SIGAGSVVGVGVLST. The Periplasmic portion of the chain corresponds to 372 to 377; that stretch reads HIGLAN. A helical membrane pass occupies residues 378 to 398; it reads AMGTFCLVAYAFAVFGIMLLP. The Cytoplasmic portion of the chain corresponds to 399-428; it reads ETRGIAIENIGEADAHSPAAPLAQPASARS.

It belongs to the major facilitator superfamily. Sugar transporter (TC 2.A.1.1) family.

It is found in the cell inner membrane. Its function is as follows. Probable uptake of 4-methylmuconolactone. This chain is Probable 4-methylmuconolactone transporter, found in Cupriavidus pinatubonensis (strain JMP 134 / LMG 1197) (Cupriavidus necator (strain JMP 134)).